We begin with the raw amino-acid sequence, 473 residues long: Ribosomal RNA small subunit methyltransferase F (473 aa).

Residues 123–129, glutamate 147, aspartate 174, and aspartate 192 each bind S-adenosyl-L-methionine; that span reads AAAPGSK. Catalysis depends on cysteine 245, which acts as the Nucleophile.

It belongs to the class I-like SAM-binding methyltransferase superfamily. RsmB/NOP family.

It localises to the cytoplasm. It catalyses the reaction cytidine(1407) in 16S rRNA + S-adenosyl-L-methionine = 5-methylcytidine(1407) in 16S rRNA + S-adenosyl-L-homocysteine + H(+). Its function is as follows. Specifically methylates the cytosine at position 1407 (m5C1407) of 16S rRNA. This is Ribosomal RNA small subunit methyltransferase F from Vibrio atlanticus (strain LGP32) (Vibrio splendidus (strain Mel32)).